Reading from the N-terminus, the 69-residue chain is FXYD domain-containing ion transport regulator 11 (69 aa).

An N-terminal signal peptide occupies residues 1 to 22; it reads MSQLTELVLLTVFLALFSRAEA. The Extracellular portion of the chain corresponds to 23–33; that stretch reads NPFVYNYEALR. A helical transmembrane segment spans residues 34–54; it reads IGGLVFTCVLVAGAVTALCWG. Over 55-69 the chain is Cytoplasmic; the sequence is QCKPKRKHDDDASKI.

Belongs to the FXYD family. As to expression, detected in adult gill and in larval skin at 2 days post-fertilization (at protein level). In adult gill, strong expression is found in the basal regions of the secondary lamellae.

The protein resides in the cell membrane. May modulate the activity of a sodium/potassium-transporting ATPase. The sequence is that of FXYD domain-containing ion transport regulator 11 from Danio rerio (Zebrafish).